The sequence spans 189 residues: Cyclin-dependent kinase inhibitor 5 (189 aa).

Residues 73–93 show a composition bias toward polar residues; the sequence is KQQKQQLIPSVNQCQTKNPRA. The tract at residues 73-107 is disordered; the sequence is KQQKQQLIPSVNQCQTKNPRASSGPAKKLEPDTTT.

Belongs to the CDI family. ICK/KRP subfamily. In terms of assembly, interacts with CYCD4-1. Does not interact with CDKA-1. Expressed in flowers and at lower levels in roots and leaves.

It is found in the nucleus. The protein resides in the nucleoplasm. In terms of biological role, inhibits CYCD2-1/CDKA-1 complex kinase activity without interaction with the complex. The sequence is that of Cyclin-dependent kinase inhibitor 5 (KRP5) from Arabidopsis thaliana (Mouse-ear cress).